Here is a 367-residue protein sequence, read N- to C-terminus: Glutamate 5-kinase (367 aa).

An ATP-binding site is contributed by Lys-8. Residues Ser-49, Asp-136, and Asn-148 each contribute to the substrate site. ATP contacts are provided by residues 168–169 and 210–216; these read TD and TGGMATK. Residues 275–353 form the PUA domain; it reads TGKLLLDAGA…DQIVQILGYE (79 aa).

This sequence belongs to the glutamate 5-kinase family.

Its subcellular location is the cytoplasm. The catalysed reaction is L-glutamate + ATP = L-glutamyl 5-phosphate + ADP. Its pathway is amino-acid biosynthesis; L-proline biosynthesis; L-glutamate 5-semialdehyde from L-glutamate: step 1/2. In terms of biological role, catalyzes the transfer of a phosphate group to glutamate to form L-glutamate 5-phosphate. The chain is Glutamate 5-kinase from Synechococcus elongatus (strain ATCC 33912 / PCC 7942 / FACHB-805) (Anacystis nidulans R2).